Here is a 237-residue protein sequence, read N- to C-terminus: Ribosomal RNA small subunit methyltransferase G (237 aa).

S-adenosyl-L-methionine-binding positions include Gly-78, Phe-83, 129–130, and Arg-148; that span reads AE.

Belongs to the methyltransferase superfamily. RNA methyltransferase RsmG family.

Its subcellular location is the cytoplasm. Its function is as follows. Specifically methylates the N7 position of a guanine in 16S rRNA. The protein is Ribosomal RNA small subunit methyltransferase G of Streptococcus thermophilus (strain CNRZ 1066).